Reading from the N-terminus, the 157-residue chain is RxLR effector protein PITG_04049 (157 aa).

The N-terminal stretch at 1–23 (MRLIAGVLAGFLVICEVTSTSES) is a signal peptide. A RxLR-dEER motif is present at residues 51 to 65 (QFLRTDVVMNRGEER).

This sequence belongs to the RxLR effector family.

The protein localises to the secreted. The protein resides in the host cytoplasm. It is found in the host nucleus. In terms of biological role, effector that might be involved in host plant infection. The chain is RxLR effector protein PITG_04049 from Phytophthora infestans (strain T30-4) (Potato late blight agent).